We begin with the raw amino-acid sequence, 656 residues long: UvrABC system protein C (656 aa).

Residues 41–120 (KSSGCYLFKD…IKTNKPYFNI (80 aa)) enclose the GIY-YIG domain. The region spanning 230–265 (DDLEVFLERKMNQYSNDLEFENAAKIRDQISGLKLL) is the UVR domain.

This sequence belongs to the UvrC family. As to quaternary structure, interacts with UvrB in an incision complex.

The protein resides in the cytoplasm. The UvrABC repair system catalyzes the recognition and processing of DNA lesions. UvrC both incises the 5' and 3' sides of the lesion. The N-terminal half is responsible for the 3' incision and the C-terminal half is responsible for the 5' incision. This is UvrABC system protein C from Prochlorococcus marinus subsp. pastoris (strain CCMP1986 / NIES-2087 / MED4).